The following is a 683-amino-acid chain: uncharacterized protein (683 aa).

Transmembrane regions (helical) follow at residues 12 to 32 (LLLY…MMGL), 41 to 61 (LWLG…IGLI), 84 to 104 (MAIA…GILF), 110 to 130 (GLAY…LLAP), 162 to 182 (IAVL…IQGV), 194 to 214 (FAVG…LGGM), 221 to 241 (QVAQ…MIAW), 377 to 397 (LNFV…PHIL), 413 to 433 (VAWA…LAAL), 495 to 515 (IAGL…AAAL), 548 to 568 (VTTA…VTSL), 573 to 593 (ILFL…PVLV), 603 to 623 (AAGA…YIIV), and 645 to 665 (IASG…VSLL).

It belongs to the sodium:solute symporter (SSF) (TC 2.A.21) family.

The protein resides in the cell membrane. This is an uncharacterized protein from Cupriavidus necator (strain ATCC 17699 / DSM 428 / KCTC 22496 / NCIMB 10442 / H16 / Stanier 337) (Ralstonia eutropha).